Reading from the N-terminus, the 505-residue chain is GMP synthase [glutamine-hydrolyzing] (505 aa).

Residues 3–190 (KVLVVNFGGQ…LRKIARISDV (188 aa)) enclose the Glutamine amidotransferase type-1 domain. C80 serves as the catalytic Nucleophile. Catalysis depends on residues H164 and E166. Residues 191 to 380 (WRPEDQITRI…LGLPEDVVYR (190 aa)) enclose the GMPS ATP-PPase domain. 218–224 (SGGVDST) contributes to the ATP binding site.

The catalysed reaction is XMP + L-glutamine + ATP + H2O = GMP + L-glutamate + AMP + diphosphate + 2 H(+). Its pathway is purine metabolism; GMP biosynthesis; GMP from XMP (L-Gln route): step 1/1. Catalyzes the synthesis of GMP from XMP. The protein is GMP synthase [glutamine-hydrolyzing] of Pyrobaculum aerophilum (strain ATCC 51768 / DSM 7523 / JCM 9630 / CIP 104966 / NBRC 100827 / IM2).